The following is a 229-amino-acid chain: Protein N-lysine methyltransferase METTL21D (229 aa).

Alanine 2 carries the post-translational modification N-acetylalanine. A Phosphoserine modification is found at serine 8. S-adenosyl-L-methionine contacts are provided by residues tryptophan 43, 75 to 77 (GSG), aspartate 96, tryptophan 126, alanine 143, and tyrosine 148.

The protein belongs to the methyltransferase superfamily. METTL21 family. In terms of assembly, interacts with ALKBH6. Interacts with ASPSCR1 and UBXN6; interaction with ASPSCR1, but not with UBXN6, enhances VCP methylation.

The protein localises to the cytoplasm. The enzyme catalyses L-lysyl-[protein] + 3 S-adenosyl-L-methionine = N(6),N(6),N(6)-trimethyl-L-lysyl-[protein] + 3 S-adenosyl-L-homocysteine + 3 H(+). Protein N-lysine methyltransferase that specifically trimethylates 'Lys-315' of VCP/p97; this modification may decrease VCP ATPase activity. The polypeptide is Protein N-lysine methyltransferase METTL21D (VCPKMT) (Homo sapiens (Human)).